Consider the following 501-residue polypeptide: ATP synthase subunit alpha (501 aa).

169-176 (GDRQTGKT) lines the ATP pocket.

Belongs to the ATPase alpha/beta chains family. As to quaternary structure, F-type ATPases have 2 components, CF(1) - the catalytic core - and CF(0) - the membrane proton channel. CF(1) has five subunits: alpha(3), beta(3), gamma(1), delta(1), epsilon(1). CF(0) has three main subunits: a(1), b(2) and c(9-12). The alpha and beta chains form an alternating ring which encloses part of the gamma chain. CF(1) is attached to CF(0) by a central stalk formed by the gamma and epsilon chains, while a peripheral stalk is formed by the delta and b chains.

The protein resides in the cell membrane. The catalysed reaction is ATP + H2O + 4 H(+)(in) = ADP + phosphate + 5 H(+)(out). In terms of biological role, produces ATP from ADP in the presence of a proton gradient across the membrane. The alpha chain is a regulatory subunit. The protein is ATP synthase subunit alpha of Streptococcus equi subsp. zooepidemicus (strain H70).